The following is an 82-amino-acid chain: Small ribosomal subunit protein bS18 (82 aa).

Belongs to the bacterial ribosomal protein bS18 family. In terms of assembly, part of the 30S ribosomal subunit. Forms a tight heterodimer with protein bS6.

Functionally, binds as a heterodimer with protein bS6 to the central domain of the 16S rRNA, where it helps stabilize the platform of the 30S subunit. The protein is Small ribosomal subunit protein bS18 of Rhizobium meliloti (strain 1021) (Ensifer meliloti).